Consider the following 277-residue polypeptide: NLP effector protein Pc109095 (277 aa).

Residues 1-19 (MKFIFAFVLCLAVAQTALG) form the signal peptide. The Hepta-peptide GHRHDWE motif motif lies at 119 to 125 (RSRHLWA). Asn-199 carries N-linked (GlcNAc...) asparagine glycosylation.

This sequence belongs to the Necrosis inducing protein (NPP1) family.

Its subcellular location is the secreted. Secreted effector that contributes strongly to virulence during infection by P.capsici. This is NLP effector protein Pc109095 from Phytophthora capsici.